The primary structure comprises 383 residues: DNA dC-&gt;dU-editing enzyme APOBEC-3G (383 aa).

The interval 1-60 (MKPHFRNTVERMYRGTFFYNFNNRPILSRRNTVWLCYEVKTRGPSMPTWGAKIFRGQLYP) is essential for cytoplasmic localization. CMP/dCMP-type deaminase domains are found at residues 29 to 138 (RRNT…LRIL) and 214 to 327 (GQRE…LRTL). T32 is modified (phosphothreonine; by PKA). Residues H65, C97, and C100 each contribute to the Zn(2+) site. Residues 209–335 (KPWVSGQRET…TLHRDGAKIA (127 aa)) are necessary for homooligomerization. Residues 213–215 (SGQ) form an interaction with DNA region. Phosphothreonine; by PKA and CAMK2 is present on T218. Residue H257 participates in Zn(2+) binding. The active-site Proton donor is E259. Residues C287 and C290 each contribute to the Zn(2+) site. The interaction with DNA stretch occupies residues 312–319 (RIYDDQGR).

The protein belongs to the cytidine and deoxycytidylate deaminase family. Homodimer. Homooligomer. Can bind RNA to form ribonucleoprotein complexes of high-molecular-mass (HMM) or low-molecular-mass (LMM). HMM is inactive and heterogeneous in protein composition because of binding nonselectively to cellular RNAs, which in turn are associated with variety of cellular proteins. The LMM form which is enzymatically active has few or no RNAs associated. Its ability to form homooligomer is distinct from its ability to assemble into HMM. Interacts with APOBEC3B, APOBEC3F, MOV10, AGO2, EIF4E, EIF4ENIF1, DCP2 and DDX6 in an RNA-dependent manner. Interacts with AGO1, AGO3 and PKA/PRKACA. Zn(2+) serves as cofactor.

Its subcellular location is the cytoplasm. The protein resides in the nucleus. The protein localises to the P-body. The catalysed reaction is a 2'-deoxycytidine in single-stranded DNA + H2O + H(+) = a 2'-deoxyuridine in single-stranded DNA + NH4(+). Its function is as follows. DNA deaminase (cytidine deaminase) which acts as an inhibitor of retrovirus replication and retrotransposon mobility. After the penetration of retroviral nucleocapsids into target cells of infection and the initiation of reverse transcription, it can induce the conversion of cytosine to uracil in the minus-sense single-strand viral DNA, leading to G-to-A hypermutations in the subsequent plus-strand viral DNA. The resultant detrimental levels of mutations in the proviral genome, along with a deamination-independent mechanism that works prior to the proviral integration, together exert efficient antiretroviral effects in infected target cells. Selectively targets single-stranded DNA and does not deaminate double-stranded DNA or single- or double-stranded RNA. The polypeptide is DNA dC-&gt;dU-editing enzyme APOBEC-3G (APOBEC3G) (Erythrocebus patas (Red guenon)).